The following is a 586-amino-acid chain: Acyl-coenzyme A synthetase ACSM3, mitochondrial (586 aa).

The transit peptide at 1–27 (MLACVTMKMLRHAKCFQRLAIFGSVRA) directs the protein to the mitochondrion. An N6-succinyllysine mark is found at Lys73 and Lys106. Lys157 bears the N6-acetyllysine mark. ATP-binding positions include 235-243 (TSGTSGYPK), 374-379 (EGYGQT), Asp461, Arg476, and Lys572.

The protein belongs to the ATP-dependent AMP-binding enzyme family. Mg(2+) serves as cofactor. Requires Mn(2+) as cofactor.

Its subcellular location is the mitochondrion. It localises to the mitochondrion matrix. It catalyses the reaction a medium-chain fatty acid + ATP + CoA = a medium-chain fatty acyl-CoA + AMP + diphosphate. It carries out the reaction propanoate + ATP + CoA = propanoyl-CoA + AMP + diphosphate. The catalysed reaction is butanoate + ATP + CoA = butanoyl-CoA + AMP + diphosphate. The enzyme catalyses 2-methylpropanoate + ATP + CoA = 2-methylpropanoyl-CoA + AMP + diphosphate. It catalyses the reaction 2-methylbutanoate + ATP + CoA = 2-methylbutanoyl-CoA + AMP + diphosphate. It carries out the reaction octanoate + ATP + CoA = octanoyl-CoA + AMP + diphosphate. Catalyzes the activation of fatty acids by CoA to produce an acyl-CoA, the first step in fatty acid metabolism. Capable of activating medium-chain fatty acids with a preference for isobutyrate among fatty acids with 2-6 carbon atoms. The polypeptide is Acyl-coenzyme A synthetase ACSM3, mitochondrial (ACSM3) (Pongo abelii (Sumatran orangutan)).